The following is a 428-amino-acid chain: 4-hydroxy-3-methylbut-2-en-1-yl diphosphate synthase (flavodoxin) (428 aa).

Residues C315, C318, C361, and E368 each contribute to the [4Fe-4S] cluster site.

Belongs to the IspG family. It depends on [4Fe-4S] cluster as a cofactor.

The catalysed reaction is (2E)-4-hydroxy-3-methylbut-2-enyl diphosphate + oxidized [flavodoxin] + H2O + 2 H(+) = 2-C-methyl-D-erythritol 2,4-cyclic diphosphate + reduced [flavodoxin]. It functions in the pathway isoprenoid biosynthesis; isopentenyl diphosphate biosynthesis via DXP pathway; isopentenyl diphosphate from 1-deoxy-D-xylulose 5-phosphate: step 5/6. Its function is as follows. Converts 2C-methyl-D-erythritol 2,4-cyclodiphosphate (ME-2,4cPP) into 1-hydroxy-2-methyl-2-(E)-butenyl 4-diphosphate. The polypeptide is 4-hydroxy-3-methylbut-2-en-1-yl diphosphate synthase (flavodoxin) (Ralstonia pickettii (strain 12J)).